The sequence spans 581 residues: Probable hexosyltransferase MUCI70 (581 aa).

Over 1–58 (MTGLGVRSSSYGSLEKTGLNGVVLPIQITTTTRTKPSKMQKDREGIVHWICKFAGRKK) the chain is Cytoplasmic. Residues 59–79 (VGMLLLFLISAVVFLRVLYVG) traverse the membrane as a helical; Signal-anchor for type II membrane protein segment. Over 80–581 (KGEDSQEGQG…NLPVRLPDSA (502 aa)) the chain is Lumenal. N-linked (GlcNAc...) asparagine glycans are attached at residues Asn-96, Asn-102, Asn-119, Asn-194, Asn-224, Asn-285, Asn-382, Asn-411, and Asn-488. Residues 514–581 (RFARQRPPVP…NLPVRLPDSA (68 aa)) form a disordered region. A compositionally biased stretch (pro residues) spans 520 to 536 (PPVPNFPPPPPSPPPPV). Residues 553-571 (PPRRRGRDRRSGQRGHRKA) show a composition bias toward basic residues.

The protein belongs to the glycosyltransferase 8 family. As to expression, expressed in siliques and seeds.

It is found in the golgi apparatus membrane. Its pathway is glycan metabolism; pectin biosynthesis. Functionally, probable glycosyltransferase involved in pectin and/or xylans biosynthesis in cell walls. Together with IRX14, required for xylan and pectin synthesis in seed coat epidermal (SCE) cells. Collaboratively with GAUT11, essential for the accumulation of seed mucilage, a gelatinous wall rich in unbranched rhamnogalacturonan I (RG I), and for shaping the surface morphology of seeds. The chain is Probable hexosyltransferase MUCI70 from Arabidopsis thaliana (Mouse-ear cress).